A 239-amino-acid chain; its full sequence is tRNA (guanine-N(1)-)-methyltransferase (239 aa).

S-adenosyl-L-methionine is bound by residues Gly-115 and Met-134–Leu-139. The disordered stretch occupies residues Gln-210–Pro-239. The segment covering Gln-211 to Leu-224 has biased composition (basic and acidic residues).

This sequence belongs to the RNA methyltransferase TrmD family. As to quaternary structure, homodimer.

The protein resides in the cytoplasm. It carries out the reaction guanosine(37) in tRNA + S-adenosyl-L-methionine = N(1)-methylguanosine(37) in tRNA + S-adenosyl-L-homocysteine + H(+). Its function is as follows. Specifically methylates guanosine-37 in various tRNAs. The polypeptide is tRNA (guanine-N(1)-)-methyltransferase (Synechococcus sp. (strain CC9311)).